Reading from the N-terminus, the 528-residue chain is Ankyrin repeat and death domain-containing protein 1B (528 aa).

10 ANK repeats span residues 67-96 (PNER…NINV), 100-129 (MNRT…RVDV), 133-162 (HGLT…DQRA), 166-197 (DGMS…DLNQ), 201-230 (KGRK…HTSE), 234-263 (GGNT…DINE), 267-296 (LNIS…DLHQ), 300-329 (PKES…DIDI), 333-362 (KQQT…DLKA), and 366-395 (QGKT…YYAW). The Death domain maps to 427-515 (TLLWDLAYHQ…KLAEKTRHFK (89 aa)).

The chain is Ankyrin repeat and death domain-containing protein 1B (ANKDD1B) from Homo sapiens (Human).